A 293-amino-acid polypeptide reads, in one-letter code: Putative ABC transporter ATP-binding protein AF_0731 (293 aa).

Residues 2-236 (IEAVDLHFCY…RKLGIRSFSL (235 aa)) enclose the ABC transporter domain. 34–41 (GRNGAGKT) lines the ATP pocket.

The protein belongs to the ABC transporter superfamily.

The protein resides in the cell membrane. Probably part of an ABC transporter complex. Responsible for energy coupling to the transport system. The sequence is that of Putative ABC transporter ATP-binding protein AF_0731 from Archaeoglobus fulgidus (strain ATCC 49558 / DSM 4304 / JCM 9628 / NBRC 100126 / VC-16).